The primary structure comprises 295 residues: NAD kinase (295 aa).

The Proton acceptor role is filled by aspartate 72. NAD(+) is bound by residues aspartate 72–glycine 73, asparagine 146–aspartate 147, arginine 157, lysine 174, aspartate 176, threonine 187–serine 192, and glutamine 247.

This sequence belongs to the NAD kinase family. It depends on a divalent metal cation as a cofactor.

It is found in the cytoplasm. The enzyme catalyses NAD(+) + ATP = ADP + NADP(+) + H(+). Functionally, involved in the regulation of the intracellular balance of NAD and NADP, and is a key enzyme in the biosynthesis of NADP. Catalyzes specifically the phosphorylation on 2'-hydroxyl of the adenosine moiety of NAD to yield NADP. This Ectopseudomonas mendocina (strain ymp) (Pseudomonas mendocina) protein is NAD kinase.